Consider the following 111-residue polypeptide: MKTLLLALAVVVLVCLGSANELGLGRQQIDRGRRQAIGPPYGICYQCNRKSCRDCFNPKRCPSYHTMCYTLYKPNENGAEEWAVKGCARKCPTAGPNERVNCCRGRDCNND.

Positions 1–19 (MKTLLLALAVVVLVCLGSA) are cleaved as a signal peptide. Residues 20–34 (NELGLGRQQIDRGRR) constitute a propeptide that is removed on maturation. Glutamine 35 carries the post-translational modification Pyrrolidone carboxylic acid. 5 disulfides stabilise this stretch: cysteine 44-cysteine 68, cysteine 47-cysteine 55, cysteine 61-cysteine 87, cysteine 91-cysteine 102, and cysteine 103-cysteine 108.

The protein belongs to the three-finger toxin family. Ancestral subfamily. Boigatoxin sub-subfamily. As to quaternary structure, heterodimer of sulditoxin subunits A and B; probably disulfide-linked. In terms of tissue distribution, expressed by the venom gland.

The protein resides in the secreted. In terms of biological role, reptile-specific neurotoxin (tested on geckos). Inhibits nicotinic acetylcholine receptor (nAChR). Not toxic to mammals (tested on mice). The chain is Sulditoxin subunit B from Spilotes sulphureus (Amazon puffing snake).